Consider the following 277-residue polypeptide: 3-methyl-2-oxobutanoate hydroxymethyltransferase (277 aa).

Residues aspartate 42 and aspartate 81 each contribute to the Mg(2+) site. 3-methyl-2-oxobutanoate contacts are provided by residues 42-43, aspartate 81, and lysine 110; that span reads DS. Residue glutamate 112 coordinates Mg(2+). The active-site Proton acceptor is the glutamate 179.

It belongs to the PanB family. Homodecamer; pentamer of dimers. Mg(2+) is required as a cofactor.

The protein resides in the cytoplasm. The catalysed reaction is 3-methyl-2-oxobutanoate + (6R)-5,10-methylene-5,6,7,8-tetrahydrofolate + H2O = 2-dehydropantoate + (6S)-5,6,7,8-tetrahydrofolate. It functions in the pathway cofactor biosynthesis; (R)-pantothenate biosynthesis; (R)-pantoate from 3-methyl-2-oxobutanoate: step 1/2. Catalyzes the reversible reaction in which hydroxymethyl group from 5,10-methylenetetrahydrofolate is transferred onto alpha-ketoisovalerate to form ketopantoate. The sequence is that of 3-methyl-2-oxobutanoate hydroxymethyltransferase from Anaplasma marginale (strain St. Maries).